Reading from the N-terminus, the 66-residue chain is Vesicular acetylcholine transporter (66 aa).

A helical transmembrane segment spans residues 1–15; sequence GMGLANLLYAPVLLL. At 16–66 the chain is on the cytoplasmic side; that stretch reads LRNVGLLTRSRSERDVLLDEPPQGLYDAVRLRERPVSGQDGEPRSPPGPFD. A disordered region spans residues 43-66; that stretch reads AVRLRERPVSGQDGEPRSPPGPFD.

The protein belongs to the major facilitator superfamily. Vesicular transporter family. In terms of assembly, interacts with SEC14L1.

Its subcellular location is the cytoplasmic vesicle. The protein localises to the secretory vesicle. The protein resides in the synaptic vesicle membrane. It carries out the reaction acetylcholine(out) + 2 H(+)(in) = acetylcholine(in) + 2 H(+)(out). The enzyme catalyses choline(in) + 2 H(+)(out) = choline(out) + 2 H(+)(in). It catalyses the reaction serotonin(in) + 2 H(+)(out) = serotonin(out) + 2 H(+)(in). In terms of biological role, electrogenic antiporter that exchanges one cholinergic neurotransmitter, acetylcholine or choline, with two intravesicular protons across the membrane of synaptic vesicles. Uses the electrochemical proton gradient established by the V-type proton-pump ATPase to store neurotransmitters inside the vesicles prior to their release via exocytosis. Determines cholinergic vesicular quantal size at presynaptic nerve terminals in developing neuro-muscular junctions with an impact on motor neuron differentiation and innervation pattern. Part of forebrain cholinergic system, regulates hippocampal synapse transmissions that underlie spatial memory formation. Can transport serotonin. The protein is Vesicular acetylcholine transporter (SLC18A3) of Macaca fuscata fuscata (Japanese macaque).